A 159-amino-acid polypeptide reads, in one-letter code: Small ribosomal subunit protein uS17y (159 aa).

It belongs to the universal ribosomal protein uS17 family.

Its subcellular location is the cytoplasm. This is Small ribosomal subunit protein uS17y (RPS11B) from Arabidopsis thaliana (Mouse-ear cress).